Here is a 205-residue protein sequence, read N- to C-terminus: Urease accessory protein UreE (205 aa).

Over residues His171–His192 the composition is skewed to basic and acidic residues. Residues His171 to Arg205 are disordered.

Belongs to the UreE family.

The protein localises to the cytoplasm. Functionally, involved in urease metallocenter assembly. Binds nickel. Probably functions as a nickel donor during metallocenter assembly. In Burkholderia pseudomallei (strain K96243), this protein is Urease accessory protein UreE.